Here is a 216-residue protein sequence, read N- to C-terminus: Uracil phosphoribosyltransferase (216 aa).

5-phospho-alpha-D-ribose 1-diphosphate contacts are provided by residues arginine 85, arginine 110, and 135 to 143 (DPMVATGYS). Uracil is bound by residues isoleucine 200 and 205–207 (GDA). Position 206 (aspartate 206) interacts with 5-phospho-alpha-D-ribose 1-diphosphate.

It belongs to the UPRTase family. Mg(2+) is required as a cofactor.

It carries out the reaction UMP + diphosphate = 5-phospho-alpha-D-ribose 1-diphosphate + uracil. The protein operates within pyrimidine metabolism; UMP biosynthesis via salvage pathway; UMP from uracil: step 1/1. With respect to regulation, allosterically activated by GTP. Its function is as follows. Catalyzes the conversion of uracil and 5-phospho-alpha-D-ribose 1-diphosphate (PRPP) to UMP and diphosphate. The sequence is that of Uracil phosphoribosyltransferase from Burkholderia ambifaria (strain MC40-6).